We begin with the raw amino-acid sequence, 37 residues long: Large ribosomal subunit protein bL36 (37 aa).

It belongs to the bacterial ribosomal protein bL36 family.

This is Large ribosomal subunit protein bL36 from Nocardioides sp. (strain ATCC BAA-499 / JS614).